A 339-amino-acid polypeptide reads, in one-letter code: Annexin A2 (339 aa).

Residue Ser-2 is modified to N-acetylserine. Residues 2–24 (STVHEILCKLSLEGDHSTPPSAY) form an S100A10-binding site region. Position 24 is a phosphotyrosine; by SRC (Tyr-24). Ser-26 is subject to Phosphoserine; by PKC. Annexin repeat units follow at residues 33-104 (FDAE…GLLK) and 105-176 (TPAQ…ALAK). An N6-acetyllysine; alternate modification is found at Lys-49. Lys-49 participates in a covalent cross-link: Glycyl lysine isopeptide (Lys-Gly) (interchain with G-Cter in SUMO1); alternate. Residue Lys-49 forms a Glycyl lysine isopeptide (Lys-Gly) (interchain with G-Cter in SUMO2); alternate linkage. Lys-152 is subject to N6-acetyllysine. Position 184 is a phosphoserine (Ser-184). Annexin repeat units follow at residues 189–261 (ELID…NLVQ) and 265–336 (NKPL…YLCG). Position 199 is a phosphotyrosine (Tyr-199). Lys-227 is subject to N6-acetyllysine.

The protein belongs to the annexin family. Heterotetramer containing 2 light chains of S100A10/p11 and 2 heavy chains of ANXA2/p36. Interacts with ATP1B1. Interacts with DYSF. Interacts with COCH. Interacts (via repeat Annexin 1) with PCSK9 (via the C-terminal domain); the interaction inhibits the degradation of LDLR. Interacts with CEACAM1 (via the cytoplasmic domain); this interaction is regulated by phosphorylation of CEACAM1. Interacts with APPL2 and APPL1; targets APPL2 to endosomes and acting in parallel to RAB5A. Interacts with S100A4. May interact with UBAP2. Interacts with PLEKHG4B; this interaction is required for PLEKHG4B localization to cell-cell adhesions. Post-translationally, ISGylated.

The protein localises to the secreted. It is found in the extracellular space. Its subcellular location is the extracellular matrix. It localises to the basement membrane. Functionally, calcium-regulated membrane-binding protein whose affinity for calcium is greatly enhanced by anionic phospholipids. It binds two calcium ions with high affinity. May be involved in heat-stress response. Inhibits PCSK9-enhanced LDLR degradation, probably reduces PCSK9 protein levels via a translational mechanism but also competes with LDLR for binding with PCSK9. Binds to endosomes damaged by phagocytosis of particulate wear debris and participates in endosomal membrane stabilization, thereby limiting NLRP3 inflammasome activation. Required for endothelial cell surface plasmin generation and may support fibrinolytic surveillance and neoangiogenesis. This is Annexin A2 (ANXA2) from Canis lupus familiaris (Dog).